The chain runs to 315 residues: AT-hook motif nuclear-localized protein 19 (315 aa).

A compositionally biased stretch (polar residues) spans 1–25 (MANPWWTGQVNLSGLETTPPGSSQL). Disordered stretches follow at residues 1 to 104 (MANP…RDSP) and 239 to 285 (EEEA…YNMP). The segment covering 61-74 (DNLSGDDHEPREGA) has biased composition (basic and acidic residues). The a.T hook DNA-binding region spans 80–92 (RRPRGRPAGSKNK). The 145-residue stretch at 104 to 248 (PNALKSHVME…EEEAAERGGG (145 aa)) folds into the PPC domain. Positions 245-276 (RGGGGGSGGVVPGQLGGGGSPLSSGAGGGDGN) are enriched in gly residues.

In terms of tissue distribution, slightly expressed in roots.

It localises to the nucleus. Transcription factor that specifically binds AT-rich DNA sequences related to the nuclear matrix attachment regions (MARs). Negatively regulates plant innate immunity (PTI) to pathogens through the down-regulation of the PAMP-triggered FRK1 expression. Positively regulates defense against fungal Verticillium infection. The protein is AT-hook motif nuclear-localized protein 19 of Arabidopsis thaliana (Mouse-ear cress).